Here is a 398-residue protein sequence, read N- to C-terminus: Enoyl-[acyl-carrier-protein] reductase [NADH] (398 aa).

NAD(+) contacts are provided by residues 48-53, 74-75, 111-112, and 139-140; these read GASTGY, FE, DG, and LA. Tyrosine 225 contacts substrate. Tyrosine 235 acts as the Proton donor in catalysis. Residues lysine 244 and 273–275 contribute to the NAD(+) site; that span reads VVT.

It belongs to the TER reductase family. In terms of assembly, monomer.

The enzyme catalyses a 2,3-saturated acyl-[ACP] + NAD(+) = a (2E)-enoyl-[ACP] + NADH + H(+). The protein operates within lipid metabolism; fatty acid biosynthesis. In terms of biological role, involved in the final reduction of the elongation cycle of fatty acid synthesis (FAS II). Catalyzes the reduction of a carbon-carbon double bond in an enoyl moiety that is covalently linked to an acyl carrier protein (ACP). This is Enoyl-[acyl-carrier-protein] reductase [NADH] from Variovorax paradoxus (strain S110).